Consider the following 172-residue polypeptide: Shikimate kinase (172 aa).

11–16 (GAGKST) is a binding site for ATP. Ser15 contributes to the Mg(2+) binding site. Residues Asp33, Arg57, and Gly79 each coordinate substrate. Arg117 is an ATP binding site. Substrate is bound at residue Arg136. Arg153 is an ATP binding site.

This sequence belongs to the shikimate kinase family. Monomer. The cofactor is Mg(2+).

The protein resides in the cytoplasm. It carries out the reaction shikimate + ATP = 3-phosphoshikimate + ADP + H(+). It participates in metabolic intermediate biosynthesis; chorismate biosynthesis; chorismate from D-erythrose 4-phosphate and phosphoenolpyruvate: step 5/7. Its function is as follows. Catalyzes the specific phosphorylation of the 3-hydroxyl group of shikimic acid using ATP as a cosubstrate. The sequence is that of Shikimate kinase from Pseudomonas syringae pv. tomato (strain ATCC BAA-871 / DC3000).